The chain runs to 285 residues: Probable enoyl-CoA hydratase echA12 (285 aa).

Belongs to the enoyl-CoA hydratase/isomerase family.

The enzyme catalyses a (3S)-3-hydroxyacyl-CoA = a (2E)-enoyl-CoA + H2O. It carries out the reaction a 4-saturated-(3S)-3-hydroxyacyl-CoA = a (3E)-enoyl-CoA + H2O. Could possibly oxidize fatty acids using specific components. In Mycobacterium bovis (strain ATCC BAA-935 / AF2122/97), this protein is Probable enoyl-CoA hydratase echA12 (echA12).